Consider the following 304-residue polypeptide: tRNA dimethylallyltransferase (304 aa).

Residue 9–16 (APTAAGKS) coordinates ATP. 11–16 (TAAGKS) serves as a coordination point for substrate.

This sequence belongs to the IPP transferase family. Monomer. Mg(2+) is required as a cofactor.

The catalysed reaction is adenosine(37) in tRNA + dimethylallyl diphosphate = N(6)-dimethylallyladenosine(37) in tRNA + diphosphate. Functionally, catalyzes the transfer of a dimethylallyl group onto the adenine at position 37 in tRNAs that read codons beginning with uridine, leading to the formation of N6-(dimethylallyl)adenosine (i(6)A). The protein is tRNA dimethylallyltransferase of Deinococcus geothermalis (strain DSM 11300 / CIP 105573 / AG-3a).